A 750-amino-acid chain; its full sequence is MIIRSPEPEVKIVVDRDPIKTSFEEWARPGHFSRTIAKGPDTTTWIWNLHADAHDFDSHTSDLEEISRKVFSAHFGQLSIIFLWLSGMYFHGARFSNYEAWLSDPTHIGPSAQVVWPIVGQEILNGDVGGGFRGIQITSGFFQIWRASGITSELQLYCTAIGALVFAALMLFAGWFHYHKAAPKLAWFQDVESMLNHHLAGLLGLGSLSWAGHQVHVSLPINQFLDAGVDPKEIPLPHEFILNRDLLAQLYPSFAEGATPFFTLNWSKYAEFLSFRGGLNPVTGGLWLTDIAHHHLAIAILFLIAGHMYRTNWGIGHGLKDILEAHKGPFTGQGHKGLYEILTTSWHAQLSLNLAMLGSSTIVVAHHMYSMPPYPYLAIDYGTQLSLFTHHMWIGGFLIVGAAAHAAIFMVRDYDPTTRYNDLLDRVLRHRDAIISHLNWACIFLGFHSFGLYIHNDTMSALGRPQDMFSDTAIQLQPIFAQWVQNTHALAPGATAPGATTSTSLTWGGSDLVAVGGKVALLPIPLGTADFLVHHIHAFTIHVTVLILLKGVLFARSSRLIPDKANLGFRFPCDGPGRGGTCQVSAWDHVFLGLFWMYNAISVVIFHFSWKMQSDVWGSISDQGVVTHITGGNFAQSSITINGWLRDFLWAQASQVIQSYGSSLSAYGLFFLGAHFVWAFSLMFLFSGRGYWQELIESIVWAHNKLKVAPATQPRALSIVQGRAVGVTHYLLGGIATTWAFFLARIIAVG.

Helical transmembrane passes span 70-93 (VFSA…FHGA), 156-179 (LYCT…FHYH), 195-219 (LNHH…HVSL), 291-309 (IAHH…GHMY), 346-369 (WHAQ…HHMY), 385-411 (LSLF…IFMV), 433-455 (AIIS…LYIH), and 531-549 (FLVH…LILL). Cys-573 and Cys-582 together coordinate [4Fe-4S] cluster. A run of 2 helical transmembrane segments spans residues 589–610 (HVFL…HFSW) and 664–686 (LSAY…MFLF). His-675 serves as a coordination point for chlorophyll a'. Chlorophyll a is bound by residues Met-683 and Tyr-691. Trp-692 provides a ligand contact to phylloquinone. The chain crosses the membrane as a helical span at residues 724-744 (AVGVTHYLLGGIATTWAFFLA).

The protein belongs to the PsaA/PsaB family. As to quaternary structure, the PsaA/B heterodimer binds the P700 chlorophyll special pair and subsequent electron acceptors. PSI consists of a core antenna complex that captures photons, and an electron transfer chain that converts photonic excitation into a charge separation. The eukaryotic PSI reaction center is composed of at least 11 subunits. P700 is a chlorophyll a/chlorophyll a' dimer, A0 is one or more chlorophyll a, A1 is one or both phylloquinones and FX is a shared 4Fe-4S iron-sulfur center. serves as cofactor.

The protein resides in the plastid. It localises to the chloroplast thylakoid membrane. The catalysed reaction is reduced [plastocyanin] + hnu + oxidized [2Fe-2S]-[ferredoxin] = oxidized [plastocyanin] + reduced [2Fe-2S]-[ferredoxin]. In terms of biological role, psaA and PsaB bind P700, the primary electron donor of photosystem I (PSI), as well as the electron acceptors A0, A1 and FX. PSI is a plastocyanin-ferredoxin oxidoreductase, converting photonic excitation into a charge separation, which transfers an electron from the donor P700 chlorophyll pair to the spectroscopically characterized acceptors A0, A1, FX, FA and FB in turn. Oxidized P700 is reduced on the lumenal side of the thylakoid membrane by plastocyanin. The protein is Photosystem I P700 chlorophyll a apoprotein A1 of Liriodendron tulipifera (Tuliptree).